We begin with the raw amino-acid sequence, 293 residues long: 4-hydroxy-tetrahydrodipicolinate synthase (293 aa).

T44 provides a ligand contact to pyruvate. The active-site Proton donor/acceptor is Y132. The active-site Schiff-base intermediate with substrate is K160. I204 lines the pyruvate pocket.

The protein belongs to the DapA family. Homotetramer; dimer of dimers.

The protein resides in the cytoplasm. It carries out the reaction L-aspartate 4-semialdehyde + pyruvate = (2S,4S)-4-hydroxy-2,3,4,5-tetrahydrodipicolinate + H2O + H(+). It participates in amino-acid biosynthesis; L-lysine biosynthesis via DAP pathway; (S)-tetrahydrodipicolinate from L-aspartate: step 3/4. Its function is as follows. Catalyzes the condensation of (S)-aspartate-beta-semialdehyde [(S)-ASA] and pyruvate to 4-hydroxy-tetrahydrodipicolinate (HTPA). This is 4-hydroxy-tetrahydrodipicolinate synthase from Hyphomonas neptunium (strain ATCC 15444).